The following is a 221-amino-acid chain: Glutathione S-transferase 1 (221 aa).

Positions 7–88 (QKMQLYSFSL…YLEEKFPENP (82 aa)) constitute a GST N-terminal domain. Glutathione-binding positions include 17–22 (SSCAWR), V60, 72–73 (DS), Q112, and 116–118 (NLA). The GST C-terminal domain occupies 93–221 (DLQKRALNYQ…ISPMLDEAKS (129 aa)).

The protein belongs to the GST superfamily. Zeta family.

It carries out the reaction RX + glutathione = an S-substituted glutathione + a halide anion + H(+). Conjugation of reduced glutathione to a wide number of exogenous and endogenous hydrophobic electrophiles. The chain is Glutathione S-transferase 1 (GST1) from Dianthus caryophyllus (Carnation).